The following is a 545-amino-acid chain: CTP synthase (545 aa).

The amidoligase domain stretch occupies residues 1-266 (MTTNYIFVTG…DDYICKRFSL (266 aa)). Serine 14 is a CTP binding site. A UTP-binding site is contributed by serine 14. ATP is bound by residues 15–20 (SLGKGI) and aspartate 72. 2 residues coordinate Mg(2+): aspartate 72 and glutamate 140. Residues 147–149 (DIE), 187–192 (KTKPTQ), and lysine 223 each bind CTP. Residues 187–192 (KTKPTQ) and lysine 223 contribute to the UTP site. Residue 239 to 241 (KDI) participates in ATP binding. The 252-residue stretch at 291 to 542 (TIGMVGKYVA…VKAAGAYQKR (252 aa)) folds into the Glutamine amidotransferase type-1 domain. Residue glycine 352 coordinates L-glutamine. The active-site Nucleophile; for glutamine hydrolysis is the cysteine 379. L-glutamine is bound by residues 380 to 383 (LGMQ), glutamate 403, and arginine 470. Active-site residues include histidine 515 and glutamate 517.

The protein belongs to the CTP synthase family. As to quaternary structure, homotetramer.

The catalysed reaction is UTP + L-glutamine + ATP + H2O = CTP + L-glutamate + ADP + phosphate + 2 H(+). It carries out the reaction L-glutamine + H2O = L-glutamate + NH4(+). It catalyses the reaction UTP + NH4(+) + ATP = CTP + ADP + phosphate + 2 H(+). It participates in pyrimidine metabolism; CTP biosynthesis via de novo pathway; CTP from UDP: step 2/2. Allosterically activated by GTP, when glutamine is the substrate; GTP has no effect on the reaction when ammonia is the substrate. The allosteric effector GTP functions by stabilizing the protein conformation that binds the tetrahedral intermediate(s) formed during glutamine hydrolysis. Inhibited by the product CTP, via allosteric rather than competitive inhibition. Catalyzes the ATP-dependent amination of UTP to CTP with either L-glutamine or ammonia as the source of nitrogen. Regulates intracellular CTP levels through interactions with the four ribonucleotide triphosphates. The protein is CTP synthase of Pectobacterium atrosepticum (strain SCRI 1043 / ATCC BAA-672) (Erwinia carotovora subsp. atroseptica).